Reading from the N-terminus, the 58-residue chain is MGLGDKIRNTAEKASGKVKEATGKATDNEKLEAEGKTDQFKGNAKNTVENAKDTLRGN.

Positions 1-39 (MGLGDKIRNTAEKASGKVKEATGKATDNEKLEAEGKTDQ) are enriched in basic and acidic residues. Residues 1–58 (MGLGDKIRNTAEKASGKVKEATGKATDNEKLEAEGKTDQFKGNAKNTVENAKDTLRGN) form a disordered region.

This sequence belongs to the UPF0337 (CsbD) family.

This Corynebacterium efficiens (strain DSM 44549 / YS-314 / AJ 12310 / JCM 11189 / NBRC 100395) protein is UPF0337 protein CE1672.